The sequence spans 978 residues: Mineralocorticoid receptor (978 aa).

A modulating region spans residues 1 to 602 (METKGYHSLP…STGSSRPSKI (602 aa)). The segment covering 234–243 (SLTCSPSVEN) has biased composition (polar residues). Disordered stretches follow at residues 234–331 (SLTC…STVG) and 353–372 (GAIQ…AHDV). 5 positions are modified to phosphoserine: serine 250, serine 259, serine 283, serine 287, and serine 299. Positions 259–300 (SPLSSPLSSMKSPISSPPSHCSVKSPVSSPNNVPLRSSVSSP) are enriched in low complexity. Positions 301 to 331 (ANLNNSRCSVSSPSNTNNRSTLSSPTASTVG) are enriched in polar residues. Zn(2+)-binding residues include cysteine 603, cysteine 606, cysteine 620, cysteine 623, cysteine 637, cysteine 643, cysteine 653, and cysteine 656. 2 consecutive NR C4-type zinc fingers follow at residues 603 to 623 (CLVC…CGSC) and 637 to 661 (CAGR…LQKC). A DNA-binding region (nuclear receptor) is located at residues 603-666 (CLVCGDEASG…RLQKCLQAGM (64 aa)). Residues 667–719 (NLGARKSKKLGKLKGLHEEQPQQPPPPPPQSPEEGTTYIAPTKEPSVNSALVP) are hinge. Positions 681-706 (GLHEEQPQQPPPPPPQSPEEGTTYIA) are disordered. Pro residues predominate over residues 688–697 (QQPPPPPPQS). In terms of domain architecture, NR LBD spans 720–958 (QLASITRALT…EFPAMLVEII (239 aa)). Residues asparagine 764 and glutamine 770 each contribute to the 21-hydroxyprogesterone site. The aldosterone site is built by asparagine 764 and glutamine 770. Residues asparagine 764 and glutamine 770 each contribute to the progesterone site. Residues 776 to 779 (KWAK) form an important for coactivator binding region. 2 residues coordinate 21-hydroxyprogesterone: arginine 811 and threonine 939. Arginine 811 and threonine 939 together coordinate aldosterone. 2 residues coordinate progesterone: arginine 811 and threonine 939.

The protein belongs to the nuclear hormone receptor family. NR3 subfamily. In terms of assembly, heteromultimeric cytoplasmic complex with HSP90, HSP70, and FKBP4, in the absence of ligand. After ligand binding, it translocates to the nucleus and binds to DNA as a homodimer and as a heterodimer with NR3C1. Binds the coactivator NCOA2. May interact with HSD11B2 in the absence of ligand. Binds the coactivators NCOA1, TIF1 and NRIP1. In terms of processing, phosphorylated. Expressed in heart and kidney.

Its subcellular location is the cytoplasm. It localises to the nucleus. The protein resides in the endoplasmic reticulum membrane. Its function is as follows. Receptor for both mineralocorticoids (MC) such as aldosterone and glucocorticoids (GC) such as corticosterone or cortisol. Binds to mineralocorticoid response elements (MRE) and transactivates target genes. The effect of MC is to increase ion and water transport and thus raise extracellular fluid volume and blood pressure and lower potassium levels. The chain is Mineralocorticoid receptor (Nr3c2) from Mus musculus (Mouse).